The sequence spans 200 residues: Adenylate kinase (200 aa).

10-15 (GAGKGT) provides a ligand contact to ATP. The NMP stretch occupies residues 30–59 (STGDMLRAAVAAGTPVGLEAKAVMESGGLV). AMP contacts are provided by residues Thr-31, Arg-36, 57–59 (GLV), 85–88 (GFPR), and Gln-92. The interval 126 to 142 (KRAAETLARGQAVRKDD) is LID. Arg-127 contributes to the ATP binding site. 2 residues coordinate AMP: Arg-139 and Arg-150. An ATP-binding site is contributed by Gln-178.

It belongs to the adenylate kinase family. As to quaternary structure, monomer.

It is found in the cytoplasm. The enzyme catalyses AMP + ATP = 2 ADP. Its pathway is purine metabolism; AMP biosynthesis via salvage pathway; AMP from ADP: step 1/1. Catalyzes the reversible transfer of the terminal phosphate group between ATP and AMP. Plays an important role in cellular energy homeostasis and in adenine nucleotide metabolism. This is Adenylate kinase from Methylobacterium radiotolerans (strain ATCC 27329 / DSM 1819 / JCM 2831 / NBRC 15690 / NCIMB 10815 / 0-1).